Here is a 540-residue protein sequence, read N- to C-terminus: Phosphoenolpyruvate carboxykinase (ATP) (540 aa).

Arginine 65 provides a ligand contact to substrate. Position 87 is an N6-acetyllysine (lysine 87). Substrate-binding residues include tyrosine 207 and lysine 213. ATP is bound by residues lysine 213, histidine 232, and 248 to 256; that span reads GLSGTGKTT. Positions 213 and 232 each coordinate Mn(2+). Mn(2+) is bound at residue aspartate 269. ATP-binding positions include glutamate 297, arginine 333, 449–450, and threonine 455; that span reads RI. Arginine 333 is a substrate binding site. Lysine 523 is subject to N6-acetyllysine.

The protein belongs to the phosphoenolpyruvate carboxykinase (ATP) family. In terms of assembly, monomer. The cofactor is Mn(2+).

It is found in the cytoplasm. It catalyses the reaction oxaloacetate + ATP = phosphoenolpyruvate + ADP + CO2. Its pathway is carbohydrate biosynthesis; gluconeogenesis. Functionally, involved in the gluconeogenesis. Catalyzes the conversion of oxaloacetate (OAA) to phosphoenolpyruvate (PEP) through direct phosphoryl transfer between the nucleoside triphosphate and OAA. The sequence is that of Phosphoenolpyruvate carboxykinase (ATP) from Shigella dysenteriae serotype 1 (strain Sd197).